Reading from the N-terminus, the 329-residue chain is Fructose-1,6-bisphosphatase class 1 (329 aa).

Mg(2+) contacts are provided by Glu84, Asp103, Leu105, and Asp106. Residues 106–109 (DGSS), Asn196, and Lys262 contribute to the substrate site. Glu268 serves as a coordination point for Mg(2+).

This sequence belongs to the FBPase class 1 family. As to quaternary structure, homotetramer. Mg(2+) serves as cofactor.

The protein resides in the cytoplasm. It catalyses the reaction beta-D-fructose 1,6-bisphosphate + H2O = beta-D-fructose 6-phosphate + phosphate. The protein operates within carbohydrate biosynthesis; gluconeogenesis. The sequence is that of Fructose-1,6-bisphosphatase class 1 from Shewanella sediminis (strain HAW-EB3).